The sequence spans 336 residues: Probable tRNA pseudouridine synthase B (336 aa).

Residue D81 is the Nucleophile of the active site. The PUA domain occupies 248 to 323 (LKKVVVKDSA…VAVDVERVYM (76 aa)).

Belongs to the pseudouridine synthase TruB family. Type 2 subfamily.

The catalysed reaction is uridine(55) in tRNA = pseudouridine(55) in tRNA. In terms of biological role, could be responsible for synthesis of pseudouridine from uracil-55 in the psi GC loop of transfer RNAs. This chain is Probable tRNA pseudouridine synthase B, found in Methanocaldococcus jannaschii (strain ATCC 43067 / DSM 2661 / JAL-1 / JCM 10045 / NBRC 100440) (Methanococcus jannaschii).